Reading from the N-terminus, the 203-residue chain is Large ribosomal subunit protein bL25 (203 aa).

Belongs to the bacterial ribosomal protein bL25 family. CTC subfamily. Part of the 50S ribosomal subunit; part of the 5S rRNA/L5/L18/L25 subcomplex. Contacts the 5S rRNA. Binds to the 5S rRNA independently of L5 and L18.

This is one of the proteins that binds to the 5S RNA in the ribosome where it forms part of the central protuberance. The polypeptide is Large ribosomal subunit protein bL25 (Cereibacter sphaeroides (strain ATCC 17025 / ATH 2.4.3) (Rhodobacter sphaeroides)).